Here is a 245-residue protein sequence, read N- to C-terminus: AP-1-like transcription factor YAP7 (245 aa).

The disordered stretch occupies residues 1–144 (MRQRRSVVAV…NRDAQRAYRE (144 aa)). Residues 74 to 94 (SANNDGSSKIKKVQTSNQKDQ) are compositionally biased toward polar residues. 2 stretches are compositionally biased toward basic and acidic residues: residues 95 to 114 (MTTK…KSDD) and 135 to 144 (NRDAQRAYRE). The region spanning 125–188 (VDSVEKRRRQ…SDTKENLQKS (64 aa)) is the bZIP domain. The basic motif stretch occupies residues 130 to 149 (KRRRQNRDAQRAYRERRTTR). A leucine-zipper region spans residues 153–181 (LEEKVEMLHNLVDDWQRKYKLLESEFSDT).

It belongs to the bZIP family. YAP subfamily. As to quaternary structure, homodimer.

The protein resides in the nucleus. Functionally, probable transcription activator linked to cell cycle that induces transcription activation of genes in the environmental stress response and metabolism control pathways, like the closely related YAP5. The polypeptide is AP-1-like transcription factor YAP7 (YAP7) (Saccharomyces cerevisiae (strain ATCC 204508 / S288c) (Baker's yeast)).